The sequence spans 330 residues: Glycerol-3-phosphate dehydrogenase [NAD(P)+] (330 aa).

Residues Ser14, Phe15, Arg35, and Lys109 each contribute to the NADPH site. Lys109 and Gly137 together coordinate sn-glycerol 3-phosphate. Ala141 is an NADPH binding site. 5 residues coordinate sn-glycerol 3-phosphate: Lys192, Asp248, Ser258, Arg259, and Asn260. The active-site Proton acceptor is the Lys192. Residue Arg259 coordinates NADPH. NADPH contacts are provided by Leu283 and Glu285.

Belongs to the NAD-dependent glycerol-3-phosphate dehydrogenase family.

The protein localises to the cytoplasm. It carries out the reaction sn-glycerol 3-phosphate + NAD(+) = dihydroxyacetone phosphate + NADH + H(+). The enzyme catalyses sn-glycerol 3-phosphate + NADP(+) = dihydroxyacetone phosphate + NADPH + H(+). The protein operates within membrane lipid metabolism; glycerophospholipid metabolism. Its function is as follows. Catalyzes the reduction of the glycolytic intermediate dihydroxyacetone phosphate (DHAP) to sn-glycerol 3-phosphate (G3P), the key precursor for phospholipid synthesis. This is Glycerol-3-phosphate dehydrogenase [NAD(P)+] from Rickettsia massiliae (strain Mtu5).